Here is a 199-residue protein sequence, read N- to C-terminus: dITP/XTP pyrophosphatase (199 aa).

Thr-8–Lys-13 lines the substrate pocket. Asp-68 functions as the Proton acceptor in the catalytic mechanism. Asp-68 contributes to the Mg(2+) binding site. Residues Ser-69, Phe-155–Asp-158, Lys-177, and His-182–Arg-183 each bind substrate.

The protein belongs to the HAM1 NTPase family. As to quaternary structure, homodimer. The cofactor is Mg(2+).

It catalyses the reaction XTP + H2O = XMP + diphosphate + H(+). The catalysed reaction is dITP + H2O = dIMP + diphosphate + H(+). It carries out the reaction ITP + H2O = IMP + diphosphate + H(+). In terms of biological role, pyrophosphatase that catalyzes the hydrolysis of nucleoside triphosphates to their monophosphate derivatives, with a high preference for the non-canonical purine nucleotides XTP (xanthosine triphosphate), dITP (deoxyinosine triphosphate) and ITP. Seems to function as a house-cleaning enzyme that removes non-canonical purine nucleotides from the nucleotide pool, thus preventing their incorporation into DNA/RNA and avoiding chromosomal lesions. The protein is dITP/XTP pyrophosphatase of Borrelia duttonii (strain Ly).